Consider the following 209-residue polypeptide: Uracil phosphoribosyltransferase (209 aa).

5-phospho-alpha-D-ribose 1-diphosphate-binding positions include Arg-79, Arg-104, and 131 to 139; that span reads DPMLATGGS. Uracil-binding positions include Ile-194 and 199 to 201; that span reads GDA. Asp-200 is a 5-phospho-alpha-D-ribose 1-diphosphate binding site.

This sequence belongs to the UPRTase family. It depends on Mg(2+) as a cofactor.

It catalyses the reaction UMP + diphosphate = 5-phospho-alpha-D-ribose 1-diphosphate + uracil. Its pathway is pyrimidine metabolism; UMP biosynthesis via salvage pathway; UMP from uracil: step 1/1. Its activity is regulated as follows. Allosterically activated by GTP. Catalyzes the conversion of uracil and 5-phospho-alpha-D-ribose 1-diphosphate (PRPP) to UMP and diphosphate. The protein is Uracil phosphoribosyltransferase of Geobacillus sp. (strain WCH70).